The following is a 283-amino-acid chain: Dihydropteroate synthase (283 aa).

The 257-residue stretch at 18–274 (PKIMGIVNLT…DVKATADALK (257 aa)) folds into the Pterin-binding domain. Asn-25 lines the Mg(2+) pocket. (7,8-dihydropterin-6-yl)methyl diphosphate-binding positions include Thr-66, Asp-99, Asn-119, Asp-190, Lys-227, and 262–264 (RVH).

Belongs to the DHPS family. As to quaternary structure, homodimer. It depends on Mg(2+) as a cofactor.

The catalysed reaction is (7,8-dihydropterin-6-yl)methyl diphosphate + 4-aminobenzoate = 7,8-dihydropteroate + diphosphate. It participates in cofactor biosynthesis; tetrahydrofolate biosynthesis; 7,8-dihydrofolate from 2-amino-4-hydroxy-6-hydroxymethyl-7,8-dihydropteridine diphosphate and 4-aminobenzoate: step 1/2. Catalyzes the condensation of para-aminobenzoate (pABA) with 6-hydroxymethyl-7,8-dihydropterin diphosphate (DHPt-PP) to form 7,8-dihydropteroate (H2Pte), the immediate precursor of folate derivatives. This Neisseria meningitidis serogroup C protein is Dihydropteroate synthase (folP).